We begin with the raw amino-acid sequence, 475 residues long: Rho GTPase-activating protein 15 (475 aa).

The segment covering 1–22 (MQKSTNSDTSVETLNSTRQGTG) has biased composition (polar residues). The tract at residues 1–23 (MQKSTNSDTSVETLNSTRQGTGA) is disordered. Phosphoserine is present on residues Ser43, Ser103, Ser196, Ser199, and Ser243. The PH domain occupies 79-189 (MVEKEGYLQK…WFHAIKNAID (111 aa)). The 190-residue stretch at 281–470 (SHLHKVCERE…LMLSEYSKIF (190 aa)) folds into the Rho-GAP domain.

As to expression, expressed in lung, liver and lymphoid cells.

The protein localises to the cytoplasm. It is found in the membrane. Its function is as follows. GTPase activator for the Rho-type GTPases by converting them to an inactive GDP-bound state. Has activity toward RAC1. Overexpression results in an increase in actin stress fibers and cell contraction. This Homo sapiens (Human) protein is Rho GTPase-activating protein 15 (ARHGAP15).